We begin with the raw amino-acid sequence, 225 residues long: MSNETNCTLDFEQSVELFKEYNLFITAFLLFLTIILQYGYATRSKFIYILKMIVLWCFWPLNIAVGVISCIYPPNTGGLVAAIILTVFACLSFVGYWIQSIRLFKRCRSWWSFNPESNAVGSILLTNGQQCNFAIESVPMVLSPIIKNGVLYCEGQWLAKCEPDHLPKDIFVCTPDRRNIYRMVQKYTGDQSGNKKRFATFVYAKQSVDTGELESVATGGSSLYT.

The Virion surface segment spans residues 1–20 (MSNETNCTLDFEQSVELFKE). Residues 21 to 41 (YNLFITAFLLFLTIILQYGYA) traverse the membrane as a helical segment. The Intravirion portion of the chain corresponds to 42-51 (TRSKFIYILK). The chain crosses the membrane as a helical span at residues 52–72 (MIVLWCFWPLNIAVGVISCIY). Residues 73 to 77 (PPNTG) are Virion surface-facing. A helical membrane pass occupies residues 78–98 (GLVAAIILTVFACLSFVGYWI). The Intravirion segment spans residues 99–225 (QSIRLFKRCR…VATGGSSLYT (127 aa)).

This sequence belongs to the gammacoronaviruses M protein family. Homomultimer. Interacts with envelope E protein in the budding compartment of the host cell, which is located between endoplasmic reticulum and the Golgi complex. Forms a complex with HE and S proteins. Interacts with nucleocapsid N protein. This interaction probably participates in RNA packaging into the virus.

The protein localises to the virion membrane. Its subcellular location is the host Golgi apparatus membrane. Component of the viral envelope that plays a central role in virus morphogenesis and assembly via its interactions with other viral proteins. This Gallus gallus (Chicken) protein is Membrane protein.